Here is a 418-residue protein sequence, read N- to C-terminus: UDP-N-acetyl-D-mannosamine dehydrogenase (418 aa).

The NAD(+) site is built by Tyr-10, Ile-11, Asp-30, Thr-85, and Thr-119. 9 residues coordinate UDP-N-acetyl-alpha-D-mannosaminouronate: Arg-152, Val-153, Lys-204, Asn-208, Arg-211, His-242, Arg-244, Thr-249, and Gly-255. Catalysis depends on Lys-204, which acts as the Proton donor/acceptor. The Nucleophile role is filled by Cys-258. Lys-261 provides a ligand contact to NAD(+). UDP-N-acetyl-alpha-D-mannosaminouronate-binding residues include Tyr-318 and Lys-319. Arg-326 serves as a coordination point for NAD(+). Position 398 (Arg-398) interacts with UDP-N-acetyl-alpha-D-mannosaminouronate.

This sequence belongs to the UDP-glucose/GDP-mannose dehydrogenase family. As to quaternary structure, homodimer.

The enzyme catalyses UDP-N-acetyl-alpha-D-mannosamine + 2 NAD(+) + H2O = UDP-N-acetyl-alpha-D-mannosaminouronate + 2 NADH + 3 H(+). Its function is as follows. Catalyzes the four-electron oxidation of UDP-N-acetyl-D-mannosamine (UDP-ManNAc), reducing NAD(+) and releasing UDP-N-acetylmannosaminuronic acid (UDP-ManNAcA). This chain is UDP-N-acetyl-D-mannosamine dehydrogenase, found in Pyrococcus horikoshii (strain ATCC 700860 / DSM 12428 / JCM 9974 / NBRC 100139 / OT-3).